An 803-amino-acid polypeptide reads, in one-letter code: Putative metal ion transporter C27B12.12c (803 aa).

A compositionally biased stretch (polar residues) spans 1–20; sequence MSFQQPSNGAQGGNNNALEK. Positions 1–255 are disordered; sequence MSFQQPSNGA…SSDVSGSDEN (255 aa). A compositionally biased stretch (low complexity) spans 21–45; it reads TSSNEATSSSSTQVSSLSASGISVS. A compositionally biased stretch (polar residues) spans 58–82; the sequence is MQVQSSQHLEANVQSPVSSQTTYAT. Basic residues-rich tracts occupy residues 105–123 and 152–166; these read KPKK…RKKI and QSNK…KHSP. Composition is skewed to low complexity over residues 181-194 and 218-253; these read ALSA…QHAS and SSSS…SGSD. At serine 318 the chain carries Phosphoserine. Disordered stretches follow at residues 326–349 and 406–431; these read PRLK…QVDE and FEPH…NNAE. A compositionally biased stretch (acidic residues) spans 337 to 347; sequence DNEDREVDSQV. Basic and acidic residues predominate over residues 406–419; sequence FEPHWNDLSPHDPN. The span at 420 to 430 shows a compositional bias: polar residues; it reads DPSSSLHSNNA. Residues serine 449 and serine 452 each carry the phosphoserine modification. A run of 2 helical transmembrane segments spans residues 745-765 and 776-796; these read ITLI…FGMN and LAWF…GWII.

This sequence belongs to the CorA metal ion transporter (MIT) (TC 1.A.35) family.

The protein localises to the cytoplasm. The protein resides in the membrane. The chain is Putative metal ion transporter C27B12.12c from Schizosaccharomyces pombe (strain 972 / ATCC 24843) (Fission yeast).